The sequence spans 739 residues: BEL1-like homeodomain protein 2 (739 aa).

Disordered stretches follow at residues 23–73 and 143–222; these read SQDY…ESSV and LMNP…NSQT. Polar residues predominate over residues 41–58; that stretch reads NFSNGFDRSDSPNLTTQQ. Residues 145–155 are compositionally biased toward pro residues; sequence NPPPPQQPPSP. Over residues 179–190 the composition is skewed to low complexity; that stretch reads TNTTHHQNYTNH. The tract at residues 316–332 is SR/KY domain; that stretch reads SRYTTAAQELLEEFCSV. Residues 341-378 are disordered; the sequence is KLGNSSNPNTCGGDGGGSSPSSAGANKEHPPLSASDRI. The segment at 376–447 is BELL domain; that stretch reads DRIEHQRRKV…CLKDAVAAQL (72 aa). Residues 498 to 560 constitute a DNA-binding region (homeobox); the sequence is AWRPQRGLPE…NARVRLWKPM (63 aa). The interval 567-627 is disordered; that stretch reads QESKEREREE…TAPDASDADA (61 aa). Residues 576 to 585 show a composition bias toward acidic residues; the sequence is EELEENEEDQ. Positions 586–596 are enriched in basic and acidic residues; the sequence is ETKNSNDDKST. Residues 597–627 are compositionally biased toward low complexity; that stretch reads KSNNNESNFTAVRTTSQTPTTTAPDASDADA.

It belongs to the TALE/BELL homeobox family. May form heterodimeric complexes with TALE/KNOX proteins STM, KNAT1/BP, KNAT2 and KNAT5. Interacts with OFP1, OFP2, OFP4 and OFP5. Interacts with KNATM, isoform KNATM-B. Expressed in lateral organs.

It is found in the nucleus. Transcription factor that establishes leaf shape by repressing growth in specific subdomains of the leaf. Negatively regulates knox homeobox gene KNAT1/BP expression. The sequence is that of BEL1-like homeodomain protein 2 (BLH2) from Arabidopsis thaliana (Mouse-ear cress).